We begin with the raw amino-acid sequence, 100 residues long: NADH-quinone oxidoreductase subunit K (100 aa).

The next 3 membrane-spanning stretches (helical) occupy residues 4 to 24, 28 to 48, and 61 to 81; these read FEYYVALSGLLMVLGFIGVII, IIAMLLSTELMLNAVNIAFVA, and FVFFILTIAAAEAAIGLGLII.

Belongs to the complex I subunit 4L family. As to quaternary structure, NDH-1 is composed of 14 different subunits. Subunits NuoA, H, J, K, L, M, N constitute the membrane sector of the complex.

It localises to the cell inner membrane. It carries out the reaction a quinone + NADH + 5 H(+)(in) = a quinol + NAD(+) + 4 H(+)(out). NDH-1 shuttles electrons from NADH, via FMN and iron-sulfur (Fe-S) centers, to quinones in the respiratory chain. The immediate electron acceptor for the enzyme in this species is believed to be ubiquinone. Couples the redox reaction to proton translocation (for every two electrons transferred, four hydrogen ions are translocated across the cytoplasmic membrane), and thus conserves the redox energy in a proton gradient. This is NADH-quinone oxidoreductase subunit K from Sulfurihydrogenibium sp. (strain YO3AOP1).